The following is a 616-amino-acid chain: RNA-directed RNA polymerase (616 aa).

It carries out the reaction RNA(n) + a ribonucleoside 5'-triphosphate = RNA(n+1) + diphosphate. RNA-dependent RNA polymerase which replicates the viral genome. The protein is RNA-directed RNA polymerase of White clover cryptic virus 1 (isolate Boccardo/2004) (WCCV-1).